The following is a 400-amino-acid chain: Succinate--glutarate CoA-transferase (400 aa).

Catalysis depends on aspartate 181, which acts as the Nucleophile.

The protein belongs to the CoA-transferase III family.

It catalyses the reaction glutarate + succinyl-CoA = glutaryl-CoA + succinate. Its pathway is amino-acid degradation. The protein operates within cofactor biosynthesis; biotin biosynthesis. Functionally, is involved in L-lysine degradation and provides glutaryl-CoA for biotin synthesis. Catalyzes the conversion of glutarate to glutaryl-CoA via the transfer of CoA from succinyl-CoA. The polypeptide is Succinate--glutarate CoA-transferase (Agrobacterium fabrum (strain C58 / ATCC 33970) (Agrobacterium tumefaciens (strain C58))).